The following is a 314-amino-acid chain: Ribonuclease Z (314 aa).

Positions 62, 64, 66, 67, 139, 210, and 268 each coordinate Zn(2+). D66 functions as the Proton acceptor in the catalytic mechanism.

Belongs to the RNase Z family. In terms of assembly, homodimer. Zn(2+) is required as a cofactor.

It carries out the reaction Endonucleolytic cleavage of RNA, removing extra 3' nucleotides from tRNA precursor, generating 3' termini of tRNAs. A 3'-hydroxy group is left at the tRNA terminus and a 5'-phosphoryl group is left at the trailer molecule.. In terms of biological role, zinc phosphodiesterase, which displays some tRNA 3'-processing endonuclease activity. Probably involved in tRNA maturation, by removing a 3'-trailer from precursor tRNA. This chain is Ribonuclease Z, found in Rippkaea orientalis (strain PCC 8801 / RF-1) (Cyanothece sp. (strain PCC 8801)).